The sequence spans 383 residues: 3-dehydroquinate synthase (383 aa).

NAD(+)-binding positions include 81–86 (EGEVSK), 115–119 (GVVGD), 139–140 (TS), Lys-152, and Lys-161. Positions 194, 256, and 274 each coordinate Zn(2+).

It belongs to the sugar phosphate cyclases superfamily. Dehydroquinate synthase family. The cofactor is Co(2+). Zn(2+) serves as cofactor. Requires NAD(+) as cofactor.

Its subcellular location is the cytoplasm. The enzyme catalyses 7-phospho-2-dehydro-3-deoxy-D-arabino-heptonate = 3-dehydroquinate + phosphate. It functions in the pathway metabolic intermediate biosynthesis; chorismate biosynthesis; chorismate from D-erythrose 4-phosphate and phosphoenolpyruvate: step 2/7. Catalyzes the conversion of 3-deoxy-D-arabino-heptulosonate 7-phosphate (DAHP) to dehydroquinate (DHQ). The chain is 3-dehydroquinate synthase from Nitrobacter hamburgensis (strain DSM 10229 / NCIMB 13809 / X14).